Reading from the N-terminus, the 89-residue chain is Probable Fe(2+)-trafficking protein (89 aa).

Belongs to the Fe(2+)-trafficking protein family.

Functionally, could be a mediator in iron transactions between iron acquisition and iron-requiring processes, such as synthesis and/or repair of Fe-S clusters in biosynthetic enzymes. This is Probable Fe(2+)-trafficking protein from Hahella chejuensis (strain KCTC 2396).